Reading from the N-terminus, the 74-residue chain is ATP synthase subunit 9, mitochondrial (74 aa).

2 helical membrane passes run 16–36 (GLIG…IGVS) and 50–70 (ILGF…AFLL).

This sequence belongs to the ATPase C chain family. F-type ATPases have 2 components, CF(1) - the catalytic core - and CF(0) - the membrane proton channel. CF(1) has five subunits: alpha(3), beta(3), gamma(1), delta(1), epsilon(1). CF(0) has three main subunits: a, b and c.

It localises to the mitochondrion inner membrane. Functionally, mitochondrial membrane ATP synthase (F(1)F(0) ATP synthase or Complex V) produces ATP from ADP in the presence of a proton gradient across the membrane which is generated by electron transport complexes of the respiratory chain. F-type ATPases consist of two structural domains, F(1) - containing the extramembraneous catalytic core and F(0) - containing the membrane proton channel, linked together by a central stalk and a peripheral stalk. During catalysis, ATP synthesis in the catalytic domain of F(1) is coupled via a rotary mechanism of the central stalk subunits to proton translocation. Part of the complex F(0) domain. A homomeric c-ring of probably 10 subunits is part of the complex rotary element. This Neurospora crassa (strain ATCC 24698 / 74-OR23-1A / CBS 708.71 / DSM 1257 / FGSC 987) protein is ATP synthase subunit 9, mitochondrial (atp-9).